Reading from the N-terminus, the 854-residue chain is DNA mismatch repair protein MutS (854 aa).

616-623 (GPNMGGKS) lines the ATP pocket.

Belongs to the DNA mismatch repair MutS family.

This protein is involved in the repair of mismatches in DNA. It is possible that it carries out the mismatch recognition step. This protein has a weak ATPase activity. This chain is DNA mismatch repair protein MutS, found in Pectobacterium atrosepticum (strain SCRI 1043 / ATCC BAA-672) (Erwinia carotovora subsp. atroseptica).